A 469-amino-acid chain; its full sequence is Glutamate--tRNA ligase (469 aa).

A 'HIGH' region motif is present at residues 9–19 (PSPTGFLHVGG). The 'KMSKS' region motif lies at 236–240 (KLSKR). Lys-239 provides a ligand contact to ATP.

This sequence belongs to the class-I aminoacyl-tRNA synthetase family. Glutamate--tRNA ligase type 1 subfamily. In terms of assembly, monomer.

Its subcellular location is the cytoplasm. It carries out the reaction tRNA(Glu) + L-glutamate + ATP = L-glutamyl-tRNA(Glu) + AMP + diphosphate. Catalyzes the attachment of glutamate to tRNA(Glu) in a two-step reaction: glutamate is first activated by ATP to form Glu-AMP and then transferred to the acceptor end of tRNA(Glu). This chain is Glutamate--tRNA ligase, found in Shewanella frigidimarina (strain NCIMB 400).